A 760-amino-acid chain; its full sequence is Xaa-Pro dipeptidyl-peptidase (760 aa).

Residues S349, D469, and H499 each act as charge relay system in the active site.

The protein belongs to the peptidase S15 family. Homodimer.

It is found in the cytoplasm. The catalysed reaction is Hydrolyzes Xaa-Pro-|- bonds to release unblocked, N-terminal dipeptides from substrates including Ala-Pro-|-p-nitroanilide and (sequentially) Tyr-Pro-|-Phe-Pro-|-Gly-Pro-|-Ile.. Its function is as follows. Removes N-terminal dipeptides sequentially from polypeptides having unsubstituted N-termini provided that the penultimate residue is proline. The chain is Xaa-Pro dipeptidyl-peptidase from Streptococcus pyogenes serotype M28 (strain MGAS6180).